The following is a 276-amino-acid chain: Large ribosomal subunit protein uL2 (276 aa).

The disordered stretch occupies residues 223-276; sequence GVAMNPVDHPHGGGEGRGKGHHPTSPWGLPTKGYKTRRGKRPSDKFIVRRRNEV. Composition is skewed to basic and acidic residues over residues 230–240 and 263–276; these read DHPHGGGEGRG and RPSD…RNEV.

Belongs to the universal ribosomal protein uL2 family. In terms of assembly, part of the 50S ribosomal subunit. Forms a bridge to the 30S subunit in the 70S ribosome.

One of the primary rRNA binding proteins. Required for association of the 30S and 50S subunits to form the 70S ribosome, for tRNA binding and peptide bond formation. It has been suggested to have peptidyltransferase activity; this is somewhat controversial. Makes several contacts with the 16S rRNA in the 70S ribosome. The chain is Large ribosomal subunit protein uL2 from Thermotoga neapolitana (strain ATCC 49049 / DSM 4359 / NBRC 107923 / NS-E).